The following is a 1342-amino-acid chain: ATP-dependent RNA helicase TDRD9 (1342 aa).

Positions 31 to 63 (KAEAEDNATEVRSDKAFSELSSPEKEKSDDGNQ) are enriched in basic and acidic residues. Residues 31–81 (KAEAEDNATEVRSDKAFSELSSPEKEKSDDGNQRRKRAQLPTGPGTSPPSL) are disordered. A Helicase ATP-binding domain is found at 99–265 (VSLIENNSVV…FGSPIRNQMN (167 aa)). An ATP-binding site is contributed by 112 to 119 (GATGSGKT). The DEAH box signature appears at 211–214 (DEVH). In terms of domain architecture, Helicase C-terminal spans 317 to 503 (SLIQSFDEME…LLKVKLLDMG (187 aa)). The region spanning 901–962 (SLYPNLLCVA…RELPSDLMTP (62 aa)) is the Tudor domain.

Belongs to the DEAD box helicase family. DEAH subfamily.

It localises to the cytoplasm. The protein localises to the nucleus. The catalysed reaction is ATP + H2O = ADP + phosphate + H(+). Functionally, ATP-binding RNA helicase which plays a central role during spermatogenesis by repressing transposable elements and preventing their mobilization, which is essential for the germline integrity. Acts via the piRNA metabolic process, which mediates the repression of transposable elements during meiosis by forming complexes composed of piRNAs and Piwi proteins and governs the methylation and subsequent repression of transposons. Acts downstream of piRNA biogenesis: exclusively required for transposon silencing in the nucleus, suggesting that it acts as a nuclear effector in the nucleus together with piwil4. The protein is ATP-dependent RNA helicase TDRD9 of Danio rerio (Zebrafish).